Here is a 138-residue protein sequence, read N- to C-terminus: MSSSGTSITCEVGLQLIVPDRAPVPLVARLDYSVDDPYAIRAAFHVGDDEPVEWIFARELLTVGIIRETGEGDVRIWPSQDGKERMVNIALSSPFGQARFHAQVAPLSEFLHRTYELVPAGQESDYIDIDAEIAEHLS.

It belongs to the SsgA family. Monomer. Interacts with SsgA. Interacts with FtsZ (via N-terminus).

Its subcellular location is the cell septum. In terms of biological role, involved in sporulation-specific cell division. Required for early stages of sporulation. Important in the process of growth cessation prior to sporulation-specific cell division. Recruits cell division protein FtsZ to the future septum sites and tethers the contractile ring structure (Z ring) to the cytoplasmic membrane during sporulation. Stimulates polymerization and filament length of FtsZ in vitro. This is Sporulation-specific cell division protein SsgB from Thermobifida fusca (strain YX).